Consider the following 132-residue polypeptide: Small ribosomal subunit protein uS8 (132 aa).

It belongs to the universal ribosomal protein uS8 family. Part of the 30S ribosomal subunit. Contacts proteins S5 and S12.

Its function is as follows. One of the primary rRNA binding proteins, it binds directly to 16S rRNA central domain where it helps coordinate assembly of the platform of the 30S subunit. The protein is Small ribosomal subunit protein uS8 of Acidobacterium capsulatum (strain ATCC 51196 / DSM 11244 / BCRC 80197 / JCM 7670 / NBRC 15755 / NCIMB 13165 / 161).